The following is a 335-amino-acid chain: DNA-directed RNA polymerase subunit alpha (335 aa).

An alpha N-terminal domain (alpha-NTD) region spans residues 1-233; the sequence is MIRDEISVSI…DLFIPFLHGE (233 aa). The segment at 264-335 is alpha C-terminal domain (alpha-CTD); it reads KEKIAFQLIF…KLFAIDPPRN (72 aa).

This sequence belongs to the RNA polymerase alpha chain family. In terms of assembly, in plastids the minimal PEP RNA polymerase catalytic core is composed of four subunits: alpha, beta, beta', and beta''. When a (nuclear-encoded) sigma factor is associated with the core the holoenzyme is formed, which can initiate transcription.

It localises to the plastid. It is found in the chloroplast. The catalysed reaction is RNA(n) + a ribonucleoside 5'-triphosphate = RNA(n+1) + diphosphate. Its function is as follows. DNA-dependent RNA polymerase catalyzes the transcription of DNA into RNA using the four ribonucleoside triphosphates as substrates. The polypeptide is DNA-directed RNA polymerase subunit alpha (Pinus thunbergii (Japanese black pine)).